Reading from the N-terminus, the 307-residue chain is Type 2A encapsulin shell protein (307 aa).

This sequence belongs to the encapsulin family. Family 2A subfamily. As to quaternary structure, the encapsulin nanocompartment is formed by 60 subunits; monomers form pentamers which assemble to form shells. There are 12 charged pores where the pentamers meet as well as 3-fold axis channels and dimer channels. Isolated from bacteria in a complex with cysteine desulfurase (AC Q9KII6).

Its subcellular location is the encapsulin nanocompartment. The protein resides in the cell membrane. Its function is as follows. Shell component of a type 2A encapsulin nanocompartment. Forms encapsulin nanocompartments about 24 nm in diameter from 60 monomers, probably involved in sulfur metabolism. Probably encapsulates cysteine desulfurase. This chain is Type 2A encapsulin shell protein, found in Mycolicibacterium paratuberculosis (strain ATCC BAA-968 / K-10) (Mycobacterium paratuberculosis).